Reading from the N-terminus, the 473-residue chain is ATP synthase subunit beta (473 aa).

158–165 (GGAGVGKT) lines the ATP pocket.

It belongs to the ATPase alpha/beta chains family. F-type ATPases have 2 components, CF(1) - the catalytic core - and CF(0) - the membrane proton channel. CF(1) has five subunits: alpha(3), beta(3), gamma(1), delta(1), epsilon(1). CF(0) has three main subunits: a(1), b(2) and c(9-12). The alpha and beta chains form an alternating ring which encloses part of the gamma chain. CF(1) is attached to CF(0) by a central stalk formed by the gamma and epsilon chains, while a peripheral stalk is formed by the delta and b chains.

The protein localises to the cell membrane. The enzyme catalyses ATP + H2O + 4 H(+)(in) = ADP + phosphate + 5 H(+)(out). Its function is as follows. Produces ATP from ADP in the presence of a proton gradient across the membrane. The catalytic sites are hosted primarily by the beta subunits. This is ATP synthase subunit beta from Bacillus caldotenax.